Here is a 233-residue protein sequence, read N- to C-terminus: Probable fimbrial chaperone protein ElfD (233 aa).

Residues 1 to 26 form the signal peptide; that stretch reads MKTCITKGIVTVSLTAILLSCSSTWA.

The protein belongs to the periplasmic pilus chaperone family.

Its subcellular location is the periplasm. Its function is as follows. Part of the elfADCG fimbrial operon, which could be required for adherence to host epithelial cells. Could be required for the biogenesis of the ElfA fimbriae. The protein is Probable fimbrial chaperone protein ElfD (elfD) of Escherichia coli O157:H7.